Consider the following 95-residue polypeptide: UPF0235 protein Ssed_1229 (95 aa).

It belongs to the UPF0235 family.

This is UPF0235 protein Ssed_1229 from Shewanella sediminis (strain HAW-EB3).